The chain runs to 57 residues: UPF0391 membrane protein RPA3505 (57 aa).

The next 2 membrane-spanning stretches (helical) occupy residues 4 to 24 and 30 to 50; these read WVVT…GGIA and IAKI…VISI.

Belongs to the UPF0391 family.

The protein localises to the cell membrane. The sequence is that of UPF0391 membrane protein RPA3505 from Rhodopseudomonas palustris (strain ATCC BAA-98 / CGA009).